We begin with the raw amino-acid sequence, 95 residues long: uncharacterized protein (95 aa).

A signal peptide spans Met-1–Val-21.

This is an uncharacterized protein from Archaeoglobus fulgidus (strain ATCC 49558 / DSM 4304 / JCM 9628 / NBRC 100126 / VC-16).